We begin with the raw amino-acid sequence, 411 residues long: Phosphoglycerate kinase (411 aa).

Substrate is bound by residues 22–24, Arg37, 60–63, Arg123, and Arg165; these read DFN and HLSR. ATP contacts are provided by residues Lys216, Glu339, and 366–369; that span reads GGDS.

Belongs to the phosphoglycerate kinase family. In terms of assembly, monomer.

The protein resides in the cytoplasm. The catalysed reaction is (2R)-3-phosphoglycerate + ATP = (2R)-3-phospho-glyceroyl phosphate + ADP. Its pathway is carbohydrate degradation; glycolysis; pyruvate from D-glyceraldehyde 3-phosphate: step 2/5. This Mycoplasma genitalium (strain ATCC 33530 / DSM 19775 / NCTC 10195 / G37) (Mycoplasmoides genitalium) protein is Phosphoglycerate kinase (pgk).